A 655-amino-acid polypeptide reads, in one-letter code: NAD(P)H-quinone oxidoreductase subunit 5, chloroplastic (655 aa).

16 consecutive transmembrane segments (helical) span residues Y7–I27, F40–I60, I89–I109, F124–L144, I147–T167, G185–F205, H226–A246, T265–A285, I296–A316, L334–I354, A361–N381, A402–W422, A434–F454, I488–P508, L533–I553, and Q635–F655.

Belongs to the complex I subunit 5 family. As to quaternary structure, NDH is composed of at least 16 different subunits, 5 of which are encoded in the nucleus.

It localises to the plastid. The protein localises to the chloroplast thylakoid membrane. It catalyses the reaction a plastoquinone + NADH + (n+1) H(+)(in) = a plastoquinol + NAD(+) + n H(+)(out). The catalysed reaction is a plastoquinone + NADPH + (n+1) H(+)(in) = a plastoquinol + NADP(+) + n H(+)(out). Its function is as follows. NDH shuttles electrons from NAD(P)H:plastoquinone, via FMN and iron-sulfur (Fe-S) centers, to quinones in the photosynthetic chain and possibly in a chloroplast respiratory chain. The immediate electron acceptor for the enzyme in this species is believed to be plastoquinone. Couples the redox reaction to proton translocation, and thus conserves the redox energy in a proton gradient. The polypeptide is NAD(P)H-quinone oxidoreductase subunit 5, chloroplastic (ndhF) (Chlorokybus atmophyticus (Soil alga)).